The chain runs to 98 residues: NADH-ubiquinone oxidoreductase chain 4L (98 aa).

Helical transmembrane passes span 1 to 21, 29 to 49, and 61 to 81; these read MTLV…GLLM, SLLC…VTIL, and IILL…LVMV.

Belongs to the complex I subunit 4L family. Core subunit of respiratory chain NADH dehydrogenase (Complex I) which is composed of 45 different subunits.

It is found in the mitochondrion inner membrane. The enzyme catalyses a ubiquinone + NADH + 5 H(+)(in) = a ubiquinol + NAD(+) + 4 H(+)(out). Functionally, core subunit of the mitochondrial membrane respiratory chain NADH dehydrogenase (Complex I) which catalyzes electron transfer from NADH through the respiratory chain, using ubiquinone as an electron acceptor. Part of the enzyme membrane arm which is embedded in the lipid bilayer and involved in proton translocation. The polypeptide is NADH-ubiquinone oxidoreductase chain 4L (MT-ND4L) (Rousettus aegyptiacus (Egyptian fruit bat)).